The chain runs to 52 residues: Insulin (52 aa).

Intrachain disulfides connect C7/C38, C19/C51, and C37/C42.

The protein belongs to the insulin family. In terms of assembly, heterodimer of a B chain and an A chain linked by two disulfide bonds.

It localises to the secreted. Its function is as follows. Insulin decreases blood glucose concentration. It increases cell permeability to monosaccharides, amino acids and fatty acids. It accelerates glycolysis, the pentose phosphate cycle, and glycogen synthesis in liver. The protein is Insulin (ins) of Atractosteus spatula (Alligator gar).